The sequence spans 574 residues: Streptolysin O (574 aa).

Positions 1 to 36 (MKDMSNKKIFKKYSRVAGLLTAALIVGNLVTANADS) are cleaved as a signal peptide. A compositionally biased stretch (low complexity) spans 37 to 52 (NKQNTANTETTTTNEQ). Disordered stretches follow at residues 37 to 64 (NKQN…TTEK) and 84 to 111 (KEMP…HTEE). Over residues 53-64 (PKPESSELTTEK) the composition is skewed to basic and acidic residues. The next 4 beta stranded transmembrane spans lie at 263–276 (KSQI…NSKI), 283–292 (IDFKSISKGE), 361–370 (SNDVEAAFSA), and 378–390 (KTNG…LENS). A Conserved undecapeptide motif is present at residues 532–542 (ECTGLAWEWWR). The Cholesterol binding motif lies at 564–565 (TL).

The protein belongs to the cholesterol-dependent cytolysin family. As to quaternary structure, homooligomeric pore complex of 35 to 50 subunits; when inserted in the host membrane.

Its subcellular location is the secreted. It is found in the host cell membrane. Functionally, a cholesterol-dependent toxin that causes cytolysis by forming pores in cholesterol containing host membranes. After binding to target membranes, the protein undergoes a major conformation change, leading to its insertion in the host membrane and formation of an oligomeric pore complex. Cholesterol is required for binding to host membranes, membrane insertion and pore formation; cholesterol binding is mediated by a Thr-Leu pair in the C-terminus. Can be reversibly inactivated by oxidation. The chain is Streptolysin O (slo) from Streptococcus dysgalactiae subsp. equisimilis (Streptococcus equisimilis).